Reading from the N-terminus, the 931-residue chain is Envelope glycoprotein B (931 aa).

The first 71 residues, 1–71 (MSPCGYYSKW…FSMFVTAVVS (71 aa)), serve as a signal peptide directing secretion. At 72 to 786 (VSPSSFYESL…HGFTTFLSNP (715 aa)) the chain is on the virion surface side. 5 disulfide bridges follow: Cys122/Cys584, Cys139/Cys540, Cys213/Cys277, Cys369/Cys417, and Cys608/Cys645. Residue Asn147 is glycosylated (N-linked (GlcNAc...) asparagine; by host). An involved in fusion and/or binding to host membrane region spans residues 179–185 (AWAGSSY). Residue Asn257 is glycosylated (N-linked (GlcNAc...) asparagine; by host). An involved in fusion and/or binding to host membrane region spans residues 264–271 (GTPGTYRT). 4 N-linked (GlcNAc...) asparagine; by host glycosylation sites follow: Asn435, Asn503, Asn620, and Asn686. 2 hydrophobic membrane proximal region regions span residues 731–784 (IDKV…TFLS) and 764–784 (VVLG…TFLS). Residues 787 to 807 (FGALAVGLLVLAGLVAAFFAY) traverse the membrane as a helical segment. Over 808-931 (RYVLKLKTSP…RVRTENVTGV (124 aa)) the chain is Intravirion. A Golgi targeting motif is present at residues 881 to 884 (YMTL). The Di-leucine internalization motif motif lies at 904 to 906 (LLT). An Internalization motif motif is present at residues 920-923 (YSRV).

It belongs to the herpesviridae glycoprotein B family. In terms of assembly, homotrimer; disulfide-linked. Binds to heparan sulfate proteoglycans. Interacts with gH/gL heterodimer. Interacts with gE. A proteolytic cleavage by host furin generates two subunits that remain linked by disulfide bonds.

The protein localises to the virion membrane. It is found in the host cell membrane. Its subcellular location is the host endosome membrane. The protein resides in the host Golgi apparatus membrane. Envelope glycoprotein that forms spikes at the surface of virion envelope. Essential for the initial attachment to heparan sulfate moieties of the host cell surface proteoglycans. Involved in fusion of viral and cellular membranes leading to virus entry into the host cell. Following initial binding to its host receptors, membrane fusion is mediated by the fusion machinery composed at least of gB and the heterodimer gH/gL. May be involved in the fusion between the virion envelope and the outer nuclear membrane during virion egress. This Varicella-zoster virus (strain Dumas) (HHV-3) protein is Envelope glycoprotein B.